We begin with the raw amino-acid sequence, 351 residues long: S-adenosylmethionine:tRNA ribosyltransferase-isomerase (351 aa).

The protein belongs to the QueA family. Monomer.

The protein resides in the cytoplasm. It carries out the reaction 7-aminomethyl-7-carbaguanosine(34) in tRNA + S-adenosyl-L-methionine = epoxyqueuosine(34) in tRNA + adenine + L-methionine + 2 H(+). Its pathway is tRNA modification; tRNA-queuosine biosynthesis. Functionally, transfers and isomerizes the ribose moiety from AdoMet to the 7-aminomethyl group of 7-deazaguanine (preQ1-tRNA) to give epoxyqueuosine (oQ-tRNA). The polypeptide is S-adenosylmethionine:tRNA ribosyltransferase-isomerase (Sphingopyxis alaskensis (strain DSM 13593 / LMG 18877 / RB2256) (Sphingomonas alaskensis)).